We begin with the raw amino-acid sequence, 153 residues long: MRRIVATGTFDLLHPGHLFYLQESKKLGDELYVIVARDRNVKHKPRPIIPEEQRLQMVAALKPVDHALLGDTTDMFRPIEAIRPDVITLGFNQNFDPAVLTEALKARSLSAEVVRIGGYGDRVLCSSRRIVQRVIETRGPSLRVGQNTDPEDL.

Residues 9-10 (TF), 14-17 (HPGH), Asn-92, and Tyr-119 contribute to the ATP site.

It belongs to the archaeal FAD synthase family. In terms of assembly, homodimer. A divalent metal cation serves as cofactor.

The catalysed reaction is FMN + ATP + H(+) = FAD + diphosphate. It participates in cofactor biosynthesis; FAD biosynthesis; FAD from FMN: step 1/1. Its function is as follows. Catalyzes the transfer of the AMP portion of ATP to flavin mononucleotide (FMN) to produce flavin adenine dinucleotide (FAD) coenzyme. In Methanosphaerula palustris (strain ATCC BAA-1556 / DSM 19958 / E1-9c), this protein is FAD synthase.